A 106-amino-acid polypeptide reads, in one-letter code: Diptericin A (106 aa).

Positions 1 to 19 are cleaved as a signal peptide; it reads MQFTIAVALLCCAIASTLA. A propeptide spans 20–23 (removed by a dipeptidylpeptidase); sequence YPMP.

The protein belongs to the attacin/sarcotoxin-2 family.

It localises to the secreted. In terms of biological role, antimicrobial peptide required to resist Gram-negative bacterial infections, regulated by Dredd. This Drosophila melanogaster (Fruit fly) protein is Diptericin A.